A 60-amino-acid chain; its full sequence is Protein K12 (60 aa).

The chain is Protein K12 (K12) from Human herpesvirus 8 type P (isolate GK18) (HHV-8).